The chain runs to 929 residues: Isoleucine--tRNA ligase (929 aa).

Positions 58-68 (PYANGDIHIGH) match the 'HIGH' region motif. L-isoleucyl-5'-AMP is bound at residue E563. The short motif at 605-609 (KMSKS) is the 'KMSKS' region element. K608 serves as a coordination point for ATP. The Zn(2+) site is built by C892, C895, C912, and C915.

This sequence belongs to the class-I aminoacyl-tRNA synthetase family. IleS type 1 subfamily. In terms of assembly, monomer. Requires Zn(2+) as cofactor.

It is found in the cytoplasm. The catalysed reaction is tRNA(Ile) + L-isoleucine + ATP = L-isoleucyl-tRNA(Ile) + AMP + diphosphate. Functionally, catalyzes the attachment of isoleucine to tRNA(Ile). As IleRS can inadvertently accommodate and process structurally similar amino acids such as valine, to avoid such errors it has two additional distinct tRNA(Ile)-dependent editing activities. One activity is designated as 'pretransfer' editing and involves the hydrolysis of activated Val-AMP. The other activity is designated 'posttransfer' editing and involves deacylation of mischarged Val-tRNA(Ile). The sequence is that of Isoleucine--tRNA ligase from Neisseria meningitidis serogroup C (strain 053442).